A 340-amino-acid chain; its full sequence is Ribonucleoside-diphosphate reductase small subunit (340 aa).

3 residues coordinate Fe cation: Asp94, Glu124, and His127. Residue Tyr131 is part of the active site. Residues 180-200 (FILMILIEGIFFAASFAAIAY) traverse the membrane as a helical segment. Fe cation is bound by residues Glu187, Glu221, and His224.

The protein belongs to the ribonucleoside diphosphate reductase small chain family. As to quaternary structure, heterotetramer composed of a homodimer of the large subunit (R1) and a homodimer of the small subunit (R2). Larger multisubunit protein complex are also active, composed of (R1)n(R2)n. Fe cation serves as cofactor.

It is found in the host membrane. The enzyme catalyses a 2'-deoxyribonucleoside 5'-diphosphate + [thioredoxin]-disulfide + H2O = a ribonucleoside 5'-diphosphate + [thioredoxin]-dithiol. Its function is as follows. Ribonucleoside-diphosphate reductase holoenzyme provides the precursors necessary for viral DNA synthesis. Allows virus growth in non-dividing cells, as well as reactivation from latency in infected hosts. Catalyzes the biosynthesis of deoxyribonucleotides from the corresponding ribonucleotides. This Human herpesvirus 1 (strain KOS) (HHV-1) protein is Ribonucleoside-diphosphate reductase small subunit.